A 268-amino-acid chain; its full sequence is Interleukin-2 receptor subunit alpha (268 aa).

The first 21 residues, 1 to 21, serve as a signal peptide directing secretion; sequence MEPCLLMWGILTFITVSGYTT. One can recognise a Sushi 1 domain in the interval 22–81; the sequence is DLCDDDPPNLKHATFKALTYKTGTVLNCDCERGFRRISSYMHCTGNSSHASWENKCRCKS. The Extracellular segment spans residues 22-237; that stretch reads DLCDDDPPNL…ESFIFTTEYQ (216 aa). 3 cysteine pairs are disulfide-bonded: C24/C64, C49/C77, and C51/C79. N67 carries N-linked (GlcNAc...) asparagine glycosylation. Residues 83-112 are disordered; the sequence is SPENRKGKVTTKPEEQKGENPTEMQSQTPP. Basic and acidic residues predominate over residues 85–102; the sequence is ENRKGKVTTKPEEQKGEN. The Sushi 2 domain occupies 120-183; it reads GHCREPPPWE…WTQPPLKCIS (64 aa). Disulfide bonds link C122–C165 and C149–C181. The interval 186 to 213 is disordered; sequence QFPDDEELQASTDAPAGRDTSSPFITTS. Residues 204 to 213 show a composition bias toward polar residues; the sequence is DTSSPFITTS. A helical transmembrane segment spans residues 238-258; it reads IAVASCVLLLISIVLLSGLTW. The Cytoplasmic segment spans residues 259–268; the sequence is QRRRRKSRTI.

Non-covalent dimer of an alpha and a beta subunit. IL2R exists in 3 different forms: a high affinity dimer, an intermediate affinity monomer (beta subunit), and a low affinity monomer (alpha subunit). The high and intermediate affinity forms also associate with a gamma subunit.

Its subcellular location is the membrane. Its function is as follows. Receptor for interleukin-2. The receptor is involved in the regulation of immune tolerance by controlling regulatory T cells (TREGs) activity. TREGs suppress the activation and expansion of autoreactive T-cells. The protein is Interleukin-2 receptor subunit alpha (IL2RA) of Canis lupus familiaris (Dog).